A 133-amino-acid polypeptide reads, in one-letter code: FPRL1 inhibitory protein (133 aa).

A signal peptide spans 1–28; that stretch reads MKKNITKTIIASTVIAAGLLTQTNDAKA.

Belongs to the CHIPS/FLIPr family.

The protein localises to the secreted. May be involved in countering the first line of host defense mechanisms. Impairs the leukocyte response to FPRL1 agonists by binding directly to host FPRL1. The chain is FPRL1 inhibitory protein (flr) from Staphylococcus aureus (strain USA300).